The following is a 778-amino-acid chain: Transcription factor kayak (778 aa).

2 stretches are compositionally biased toward low complexity: residues 24–54 (AQQLQHQQQQQQQQQQQTQLQQTPHAAHTQQ) and 77–98 (QYYQQQQQQQQQEQQMLRQRQL). Disordered stretches follow at residues 24–57 (AQQLQHQQQQQQQQQQQTQLQQTPHAAHTQQNGL), 76–130 (NQYY…HQLR), 183–223 (QPTA…TTNG), 294–320 (APLVNNNNNNNGNGNGNGNGNGNVLAS), 356–414 (ASVM…GTGG), and 427–478 (RNTN…RKRR). A compositionally biased stretch (polar residues) spans 99–108 (PTQQPAASYE). 2 stretches are compositionally biased toward low complexity: residues 109-130 (QQQQQPQQHQHLQQQQQQHQLR) and 183-222 (QPTAAVATTTPTQKATPTKTTPTNNPTTTTNNSTTTTTTN). The segment covering 382–402 (ISDTSSGATDSTSYQNGHMMG) has biased composition (low complexity). Gly residues predominate over residues 403 to 414 (NSGGGNGGGTGG). Over residues 427–436 (RNTNTSNSAT) the composition is skewed to polar residues. Positions 457 to 520 (EEKRRIRRER…NQLEYFLQAH (64 aa)) constitute a bZIP domain. Residues 459 to 478 (KRRIRRERNKQAAARCRKRR) are basic motif. The leucine-zipper stretch occupies residues 485-513 (LTEEVELLEKRGENLKKEMELLNETKNQL). Residues 550 to 571 (GSCGSGSSHHNNNSNSNDSSSG) are compositionally biased toward low complexity. 2 disordered regions span residues 550–594 (GSCG…DLKP) and 756–778 (TSQNKHPLELPTPTTEPSKLVSL). Positions 579–589 (TLNSTGRSNSP) are enriched in polar residues. Ser-588 is modified (phosphoserine).

This sequence belongs to the bZIP family. Fos subfamily. In terms of assembly, homodimer. Heterodimer with Jra. The kay-Jra heterodimer binds more stably to the AP-1 site than either of the two proteins alone.

Its subcellular location is the nucleus. In terms of biological role, developmentally regulated transcription factor AP-1 binds and recognizes the enhancer DNA sequence: 5'-TGA[CG]TCA-3'. May play a role in the function or determination of a particular subset of cells in the developing embryo. It is able to carry out its function either independently of or in conjunction with Jra. The protein is Transcription factor kayak of Drosophila pseudoobscura pseudoobscura (Fruit fly).